We begin with the raw amino-acid sequence, 133 residues long: MQIDIVQIVGLGLIATFLSLIVKEQKPTFAFLIVVFAGCAIFLYLVDQIYDIIRMIEKIAINANVNMVYVETILKIIGIAYIAEFGAQLTKDAGQGAIASKIELAGKILILVMAVPILTVIIETILGLIPSMS.

The next 3 membrane-spanning stretches (helical) occupy residues 2 to 22 (QIDIVQIVGLGLIATFLSLIV), 29 to 49 (FAFLIVVFAGCAIFLYLVDQI), and 108 to 128 (ILILVMAVPILTVIIETILGL).

It is found in the cell membrane. The polypeptide is Stage III sporulation protein AD (spoIIIAD) (Bacillus subtilis (strain 168)).